A 530-amino-acid chain; its full sequence is Bifunctional purine biosynthesis protein PurH (530 aa).

Residues 1–148 (MNNARPIRRA…KNHKDVTIVV (148 aa)) enclose the MGS-like domain.

Belongs to the PurH family.

The catalysed reaction is (6R)-10-formyltetrahydrofolate + 5-amino-1-(5-phospho-beta-D-ribosyl)imidazole-4-carboxamide = 5-formamido-1-(5-phospho-D-ribosyl)imidazole-4-carboxamide + (6S)-5,6,7,8-tetrahydrofolate. It carries out the reaction IMP + H2O = 5-formamido-1-(5-phospho-D-ribosyl)imidazole-4-carboxamide. It functions in the pathway purine metabolism; IMP biosynthesis via de novo pathway; 5-formamido-1-(5-phospho-D-ribosyl)imidazole-4-carboxamide from 5-amino-1-(5-phospho-D-ribosyl)imidazole-4-carboxamide (10-formyl THF route): step 1/1. Its pathway is purine metabolism; IMP biosynthesis via de novo pathway; IMP from 5-formamido-1-(5-phospho-D-ribosyl)imidazole-4-carboxamide: step 1/1. The sequence is that of Bifunctional purine biosynthesis protein PurH from Aliivibrio fischeri (strain ATCC 700601 / ES114) (Vibrio fischeri).